A 369-amino-acid chain; its full sequence is Anhydro-N-acetylmuramic acid kinase (369 aa).

Position 12–19 (12–19 (GTSLDGVD)) interacts with ATP.

This sequence belongs to the anhydro-N-acetylmuramic acid kinase family.

It catalyses the reaction 1,6-anhydro-N-acetyl-beta-muramate + ATP + H2O = N-acetyl-D-muramate 6-phosphate + ADP + H(+). The protein operates within amino-sugar metabolism; 1,6-anhydro-N-acetylmuramate degradation. It participates in cell wall biogenesis; peptidoglycan recycling. In terms of biological role, catalyzes the specific phosphorylation of 1,6-anhydro-N-acetylmuramic acid (anhMurNAc) with the simultaneous cleavage of the 1,6-anhydro ring, generating MurNAc-6-P. Is required for the utilization of anhMurNAc either imported from the medium or derived from its own cell wall murein, and thus plays a role in cell wall recycling. The chain is Anhydro-N-acetylmuramic acid kinase from Actinobacillus pleuropneumoniae serotype 7 (strain AP76).